A 728-amino-acid polypeptide reads, in one-letter code: Dynamin-like protein 1 (728 aa).

Positions 1-119 are assembly domain, required for tetramerization; the sequence is MKELFQKIWQ…ILQEKVQSID (119 aa). The Dynamin-type G domain occupies 159-442; sequence QNLEFNIAIT…LYAGEKSKIA (284 aa). The interval 169 to 176 is G1 motif; that stretch reads GVMNAGKS. 171–177 serves as a coordination point for GDP; the sequence is MNAGKSS. The segment at 195–196 is G2 motif; sequence ET. The tract at residues 298–301 is G3 motif; the sequence is DTPG. The tract at residues 358-361 is G4 motif; the sequence is TKAD. Lys359 is a GDP binding site. Glu388 is a region of interest (G5 motif). 400–402 serves as a coordination point for GDP; that stretch reads SAK. Positions 470–695 are required for liposome binding but not for tetramerization; that stretch reads ENKQGVSEEN…LESLEKVLQS (226 aa).

The protein belongs to the TRAFAC class dynamin-like GTPase superfamily. Dynamin/Fzo/YdjA family. In terms of assembly, forms a 2:2 heterotetramer with DLP1. DLP2 forms a central back-to-back dimer flanked on each side by a DLP1 subunit. In the crystal structures the 2 DLP1 subunits are in very different conformations.

The protein resides in the cytoplasm. It localises to the cytosol. It carries out the reaction GTP + H2O = GDP + phosphate + H(+). The heterotetrameric DLP1(2)-DLP2(2) complex tethers liposomes and may mediate their fusion. Initial binding is probably mediated by DLP1, while DLP2 couples DLP1 subunits and increases the effective reach of the complex up to 45 nm. The role of the nucleotide is unknown. This subunit alone weakly binds to liposomes; GTP, GDP, GMPPCP and GMPPNP do not change heterotetramer binding. Tetramerization is required for GTPase activity, suggesting the GTPase domains (dynamin-type G) from DLP1 and DLP2 must dimerize to reconstitute the GTPase active site. This Campylobacter jejuni subsp. jejuni serotype O:23/36 (strain 81-176) protein is Dynamin-like protein 1.